The following is a 445-amino-acid chain: MEHAATLPQTSRRPATPLTGTITVPGDKSISHRALMFAGLAVGETRISGLLEGEDVLRTAAAMRALGATVERTGPGAWRASGPGIGGLQSPDDVLDMGNSGTAARLLCGILASHDIFAVMTGDASLRRRPMRRVIDPLGATGAVFAAREGGRLPLSVRGAAEAMPLSYRLPVASAQVKSALLLAGLNARGITEIEEPEPTRDHSENMLRHFGAEVEVAAHGTGKLIRLRGQPELRGADVVVPGDPSSAAFPIVAALIVPGSRVTIGGVGLNPLRTGLFLTLREMGAAIEIVNAREAGGEPVGDLIVTASDLRAVDVPAERAPSMIDEYPILAVACAMARGSSRLRGLAELRVKESDRLAATLAMITANGVKAQVDGDDLIIEGGGARGGATVATHMDHRLAMSALVMGLATETPVTIDDARFIDTSFPGFLPLMRGIGAAIEAAA.

The tract at residues 1–24 is disordered; the sequence is MEHAATLPQTSRRPATPLTGTITV. Residues 7-22 show a composition bias toward polar residues; it reads LPQTSRRPATPLTGTI. 3-phosphoshikimate contacts are provided by K28, S29, and R33. A phosphoenolpyruvate-binding site is contributed by K28. 2 residues coordinate phosphoenolpyruvate: G101 and R129. Residues S174, Q176, D326, and K353 each coordinate 3-phosphoshikimate. Phosphoenolpyruvate is bound at residue Q176. D326 acts as the Proton acceptor in catalysis. Residues R357 and R399 each contribute to the phosphoenolpyruvate site.

Belongs to the EPSP synthase family. As to quaternary structure, monomer.

The protein resides in the cytoplasm. The enzyme catalyses 3-phosphoshikimate + phosphoenolpyruvate = 5-O-(1-carboxyvinyl)-3-phosphoshikimate + phosphate. The protein operates within metabolic intermediate biosynthesis; chorismate biosynthesis; chorismate from D-erythrose 4-phosphate and phosphoenolpyruvate: step 6/7. Its function is as follows. Catalyzes the transfer of the enolpyruvyl moiety of phosphoenolpyruvate (PEP) to the 5-hydroxyl of shikimate-3-phosphate (S3P) to produce enolpyruvyl shikimate-3-phosphate and inorganic phosphate. This is 3-phosphoshikimate 1-carboxyvinyltransferase from Acidiphilium cryptum (strain JF-5).